The following is a 316-amino-acid chain: Palmitoyltransferase ZDHHC3-A (316 aa).

Topologically, residues 1 to 45 (MRSPVPRFRDVERQASGLQPPQCLPSCHERQSSMWFIKDACGIVC) are cytoplasmic. A helical transmembrane segment spans residues 46–66 (AIITWFLVFFAEFVVLFVMLI). The Lumenal portion of the chain corresponds to 67-70 (PSKN). A helical transmembrane segment spans residues 71–91 (LTYSLVNGTLFNSLAFLALAS). The Cytoplasmic segment spans residues 92–169 (HFRAMCTDPG…NCVGENNQKY (78 aa)). The 52-residue stretch at 124-175 (VYKCPKCCSIKPDRAHHCSVCKRCIRKMDHHCPWVNNCVGENNQKYFVLFTM) folds into the DHHC domain. The S-palmitoyl cysteine moiety is linked to residue Cys144. Residue Cys155 is the S-palmitoyl cysteine intermediate of the active site. Residues 170-190 (FVLFTMYICLISLHSLVMVVF) traverse the membrane as a helical segment. Over 191–212 (HFLNCFEDDWTKCSTFSPPATV) the chain is Lumenal. Residues 213 to 233 (ILLILLCFEGLLFLIFTSVMF) traverse the membrane as a helical segment. At 234-316 (GTQVHSICTD…DVIEIPLEPH (83 aa)) the chain is on the cytoplasmic side.

Belongs to the DHHC palmitoyltransferase family. As to quaternary structure, monomer. Homooligomers. The monomeric form has a higher catalytic activity. Forms heterooligomers with zdhhc7. Autopalmitoylated.

It localises to the golgi apparatus membrane. It carries out the reaction L-cysteinyl-[protein] + hexadecanoyl-CoA = S-hexadecanoyl-L-cysteinyl-[protein] + CoA. The catalysed reaction is L-cysteinyl-[protein] + tetradecanoyl-CoA = S-tetradecanoyl-L-cysteinyl-[protein] + CoA. It catalyses the reaction L-cysteinyl-[protein] + octadecanoyl-CoA = S-octadecanoyl-L-cysteinyl-[protein] + CoA. Functionally, golgi-localized palmitoyltransferase that catalyzes the addition of palmitate onto various protein substrates and regulates their association with membranes. Has no stringent fatty acid selectivity and in addition to palmitate can also transfer onto target proteins myristate from tetradecanoyl-CoA and stearate from octadecanoyl-CoA. This is Palmitoyltransferase ZDHHC3-A (zdhhc3a) from Danio rerio (Zebrafish).